The following is a 117-amino-acid chain: Ribonuclease P protein component (117 aa).

This sequence belongs to the RnpA family. In terms of assembly, consists of a catalytic RNA component (M1 or rnpB) and a protein subunit.

It carries out the reaction Endonucleolytic cleavage of RNA, removing 5'-extranucleotides from tRNA precursor.. In terms of biological role, RNaseP catalyzes the removal of the 5'-leader sequence from pre-tRNA to produce the mature 5'-terminus. It can also cleave other RNA substrates such as 4.5S RNA. The protein component plays an auxiliary but essential role in vivo by binding to the 5'-leader sequence and broadening the substrate specificity of the ribozyme. This chain is Ribonuclease P protein component, found in Staphylococcus aureus (strain bovine RF122 / ET3-1).